Reading from the N-terminus, the 724-residue chain is Pediocin PA-1 transport/processing ATP-binding protein PedD (724 aa).

Residues 13–140 (QVDENDCGLA…KEWTQIAIII (128 aa)) enclose the Peptidase C39 domain. Cys-19 is an active-site residue. 6 helical membrane-spanning segments follow: residues 170–190 (IGLI…GAYF), 207–227 (LSLV…INYI), 284–304 (TTLT…FLAY), 307–327 (INLF…VWLF), 396–416 (IKAA…TFFV), and 426–446 (LLTY…IINL). The region spanning 170–452 (IGLIITAAAI…IINLQPKLQA (283 aa)) is the ABC transmembrane type-1 domain. In terms of domain architecture, ABC transporter spans 486 to 722 (IEVNHVSFNY…NGYYARLIHN (237 aa)). 519–526 (GMSGSGKT) provides a ligand contact to ATP.

The protein belongs to the ABC transporter superfamily. Pediocin PA-1 exporter (TC 3.A.1.112.2) family.

The protein resides in the cell membrane. Involved in the export process of the bacteriocin pediocin PA-1/AcH. Is also essential for pediocin production. The polypeptide is Pediocin PA-1 transport/processing ATP-binding protein PedD (pedD) (Pediococcus acidilactici).